The primary structure comprises 262 residues: Acyl-[acyl-carrier-protein]--UDP-N-acetylglucosamine O-acyltransferase (262 aa).

Belongs to the transferase hexapeptide repeat family. LpxA subfamily. As to quaternary structure, homotrimer.

It is found in the cytoplasm. The enzyme catalyses a (3R)-hydroxyacyl-[ACP] + UDP-N-acetyl-alpha-D-glucosamine = a UDP-3-O-[(3R)-3-hydroxyacyl]-N-acetyl-alpha-D-glucosamine + holo-[ACP]. It participates in glycolipid biosynthesis; lipid IV(A) biosynthesis; lipid IV(A) from (3R)-3-hydroxytetradecanoyl-[acyl-carrier-protein] and UDP-N-acetyl-alpha-D-glucosamine: step 1/6. Functionally, involved in the biosynthesis of lipid A, a phosphorylated glycolipid that anchors the lipopolysaccharide to the outer membrane of the cell. In Burkholderia ambifaria (strain ATCC BAA-244 / DSM 16087 / CCUG 44356 / LMG 19182 / AMMD) (Burkholderia cepacia (strain AMMD)), this protein is Acyl-[acyl-carrier-protein]--UDP-N-acetylglucosamine O-acyltransferase.